Here is a 577-residue protein sequence, read N- to C-terminus: Urease subunit alpha (577 aa).

The 442-residue stretch at 136–577 (GAIDCHVHLI…LPMAQRYFLF (442 aa)) folds into the Urease domain. The Ni(2+) site is built by H141, H143, and K224. An N6-carboxylysine modification is found at K224. Residue H226 participates in substrate binding. H253 and H279 together coordinate Ni(2+). H327 acts as the Proton donor in catalysis. A Ni(2+)-binding site is contributed by D367.

This sequence belongs to the metallo-dependent hydrolases superfamily. Urease alpha subunit family. As to quaternary structure, heterotrimer of UreA (gamma), UreB (beta) and UreC (alpha) subunits. Three heterotrimers associate to form the active enzyme. Ni cation serves as cofactor. In terms of processing, carboxylation allows a single lysine to coordinate two nickel ions.

It localises to the cytoplasm. The enzyme catalyses urea + 2 H2O + H(+) = hydrogencarbonate + 2 NH4(+). Its pathway is nitrogen metabolism; urea degradation; CO(2) and NH(3) from urea (urease route): step 1/1. The sequence is that of Urease subunit alpha from Mycobacterium ulcerans (strain Agy99).